The primary structure comprises 252 residues: Imidazole glycerol phosphate synthase subunit HisF (252 aa).

Active-site residues include aspartate 11 and aspartate 130.

This sequence belongs to the HisA/HisF family. In terms of assembly, heterodimer of HisH and HisF.

It localises to the cytoplasm. It catalyses the reaction 5-[(5-phospho-1-deoxy-D-ribulos-1-ylimino)methylamino]-1-(5-phospho-beta-D-ribosyl)imidazole-4-carboxamide + L-glutamine = D-erythro-1-(imidazol-4-yl)glycerol 3-phosphate + 5-amino-1-(5-phospho-beta-D-ribosyl)imidazole-4-carboxamide + L-glutamate + H(+). Its pathway is amino-acid biosynthesis; L-histidine biosynthesis; L-histidine from 5-phospho-alpha-D-ribose 1-diphosphate: step 5/9. IGPS catalyzes the conversion of PRFAR and glutamine to IGP, AICAR and glutamate. The HisF subunit catalyzes the cyclization activity that produces IGP and AICAR from PRFAR using the ammonia provided by the HisH subunit. This chain is Imidazole glycerol phosphate synthase subunit HisF, found in Lacticaseibacillus paracasei (strain ATCC 334 / BCRC 17002 / CCUG 31169 / CIP 107868 / KCTC 3260 / NRRL B-441) (Lactobacillus paracasei).